A 148-amino-acid chain; its full sequence is 3-dehydroquinate dehydratase (148 aa).

The active-site Proton acceptor is tyrosine 26. Residues asparagine 77, histidine 83, and aspartate 90 each coordinate substrate. The active-site Proton donor is histidine 103. Substrate contacts are provided by residues 104–105 (LS) and arginine 114.

This sequence belongs to the type-II 3-dehydroquinase family. Homododecamer.

The enzyme catalyses 3-dehydroquinate = 3-dehydroshikimate + H2O. It functions in the pathway metabolic intermediate biosynthesis; chorismate biosynthesis; chorismate from D-erythrose 4-phosphate and phosphoenolpyruvate: step 3/7. Functionally, catalyzes a trans-dehydration via an enolate intermediate. The sequence is that of 3-dehydroquinate dehydratase from Chlorobaculum tepidum (strain ATCC 49652 / DSM 12025 / NBRC 103806 / TLS) (Chlorobium tepidum).